Consider the following 373-residue polypeptide: Anhydro-N-acetylmuramic acid kinase (373 aa).

13–20 (GTSMDGID) is a binding site for ATP.

It belongs to the anhydro-N-acetylmuramic acid kinase family.

The enzyme catalyses 1,6-anhydro-N-acetyl-beta-muramate + ATP + H2O = N-acetyl-D-muramate 6-phosphate + ADP + H(+). It functions in the pathway amino-sugar metabolism; 1,6-anhydro-N-acetylmuramate degradation. Its pathway is cell wall biogenesis; peptidoglycan recycling. Its function is as follows. Catalyzes the specific phosphorylation of 1,6-anhydro-N-acetylmuramic acid (anhMurNAc) with the simultaneous cleavage of the 1,6-anhydro ring, generating MurNAc-6-P. Is required for the utilization of anhMurNAc either imported from the medium or derived from its own cell wall murein, and thus plays a role in cell wall recycling. The protein is Anhydro-N-acetylmuramic acid kinase of Brucella abortus (strain 2308).